The following is a 549-amino-acid chain: Probable protein kinase UbiB (549 aa).

A Protein kinase domain is found at 123–501; it reads DFNDTPLASA…QQKSHKSNYL (379 aa). ATP-binding positions include 129-137 and Lys-152; that span reads LASASISQV. The active-site Proton acceptor is Asp-287. 2 helical membrane passes run 498-518 and 519-539; these read SNYL…LFTQ and IVTL…WAIG.

This sequence belongs to the ABC1 family. UbiB subfamily.

It is found in the cell inner membrane. The protein operates within cofactor biosynthesis; ubiquinone biosynthesis [regulation]. In terms of biological role, is probably a protein kinase regulator of UbiI activity which is involved in aerobic coenzyme Q (ubiquinone) biosynthesis. This is Probable protein kinase UbiB from Shewanella frigidimarina (strain NCIMB 400).